The following is a 243-amino-acid chain: Large ribosomal subunit protein uL2 (243 aa).

The tract at residues 202 to 243 (HGGGRHQHVGQSSTVSRNAPPGAKVGSIAARKTGRAKIKDRR) is disordered. Positions 233–243 (KTGRAKIKDRR) are enriched in basic residues.

It belongs to the universal ribosomal protein uL2 family. Part of the 50S ribosomal subunit. Forms a bridge to the 30S subunit in the 70S ribosome.

Functionally, one of the primary rRNA binding proteins. Required for association of the 30S and 50S subunits to form the 70S ribosome, for tRNA binding and peptide bond formation. It has been suggested to have peptidyltransferase activity; this is somewhat controversial. Makes several contacts with the 16S rRNA in the 70S ribosome. This chain is Large ribosomal subunit protein uL2, found in Cenarchaeum symbiosum (strain A).